A 214-amino-acid chain; its full sequence is ATP phosphoribosyltransferase (214 aa).

The protein belongs to the ATP phosphoribosyltransferase family. Short subfamily. Heteromultimer composed of HisG and HisZ subunits.

Its subcellular location is the cytoplasm. The catalysed reaction is 1-(5-phospho-beta-D-ribosyl)-ATP + diphosphate = 5-phospho-alpha-D-ribose 1-diphosphate + ATP. It functions in the pathway amino-acid biosynthesis; L-histidine biosynthesis; L-histidine from 5-phospho-alpha-D-ribose 1-diphosphate: step 1/9. Catalyzes the condensation of ATP and 5-phosphoribose 1-diphosphate to form N'-(5'-phosphoribosyl)-ATP (PR-ATP). Has a crucial role in the pathway because the rate of histidine biosynthesis seems to be controlled primarily by regulation of HisG enzymatic activity. This Nostoc punctiforme (strain ATCC 29133 / PCC 73102) protein is ATP phosphoribosyltransferase.